Reading from the N-terminus, the 444-residue chain is Transmembrane protein with metallophosphoesterase domain (444 aa).

5 consecutive transmembrane segments (helical) span residues 7-27 (LSLGAKAALAAGTVFVSMIVS), 43-63 (LFRLQLALFVNSLMLLGSIYI), 87-107 (MVVAAFLALAHSSFFTMIFLV), 114-134 (FSLVAYTCLGAYVIMLCFLCV), and 162-182 (LALRPALAVMVTTVLSVVGLL). Aspartate 214, histidine 216, aspartate 246, asparagine 277, histidine 382, and histidine 384 together coordinate a divalent metal cation.

It belongs to the metallophosphoesterase superfamily. LOC643853 family. A divalent metal cation is required as a cofactor.

Its subcellular location is the membrane. This Bos taurus (Bovine) protein is Transmembrane protein with metallophosphoesterase domain (TMPPE).